Reading from the N-terminus, the 591-residue chain is L-fucose isomerase (591 aa).

Residues Glu337 and Asp361 each act as proton acceptor in the active site. Residues Glu337, Asp361, and His528 each coordinate Mn(2+).

The protein belongs to the L-fucose isomerase family. In terms of assembly, homohexamer. It depends on Mn(2+) as a cofactor.

It is found in the cytoplasm. It catalyses the reaction L-fucose = L-fuculose. Its pathway is carbohydrate degradation; L-fucose degradation; L-lactaldehyde and glycerone phosphate from L-fucose: step 1/3. Converts the aldose L-fucose into the corresponding ketose L-fuculose. The chain is L-fucose isomerase from Escherichia coli (strain SE11).